Reading from the N-terminus, the 351-residue chain is Protein Tex24 (351 aa).

3 disordered regions span residues 69–101, 117–144, and 275–298; these read PSTA…PSLS, PEDR…AQGK, and EKVK…PKSM. Residues 73–83 show a composition bias toward basic residues; it reads HGKRKPGHLPR. The segment covering 275-285 has biased composition (basic and acidic residues); it reads EKVKPSSHDMH.

In terms of tissue distribution, specific to testis, where it is expressed in spermatogonia.

Its subcellular location is the nucleus. In terms of biological role, nuclear factor which might have a role in spermatogenesis. The sequence is that of Protein Tex24 from Mus musculus (Mouse).